A 434-amino-acid chain; its full sequence is Beta-phenylalanine transaminase (434 aa).

Arg41 serves as a coordination point for (S)-3-amino-3-phenylpropanoate. 132-133 provides a ligand contact to pyridoxal 5'-phosphate; sequence GT. An N6-(pyridoxal phosphate)lysine modification is found at Lys267. Residue Thr300 coordinates pyridoxal 5'-phosphate.

The protein belongs to the class-III pyridoxal-phosphate-dependent aminotransferase family. As to quaternary structure, homodimer. Pyridoxal 5'-phosphate serves as cofactor.

It catalyses the reaction (S)-3-amino-3-phenylpropanoate + 2-oxoglutarate = 3-oxo-3-phenylpropanoate + L-glutamate. It carries out the reaction (S)-3-amino-3-phenylpropanoate + pyruvate = 3-oxo-3-phenylpropanoate + L-alanine. Its activity is regulated as follows. Is inhibited by 2-aminooxyacetate (AOA), a mimic of beta-alanine and a known inhibitor of aminotransferases. In terms of biological role, aminotransferase that acts exclusively on beta-amino acids and exhibits a broad substrate range in vitro, accepting meta-, para- and, to a lesser extent, ortho-substituted beta-phenylalanine derivatives as amino donors, and 2-oxoglutarate or pyruvate as amino acceptors. Is highly enantioselective toward (S)-beta-phenylalanine (is not active with (R)-beta-phenylalanine) and derivatives with different substituents on the phenyl ring, allowing the kinetic resolution of various racemic beta-amino acids to yield (R)-beta-amino acids with &gt;95% enantiomeric excess (ee). Highly prefers aromatic beta-amino acids over aliphatic beta-amino acids; cannot use beta-alanine or beta-glutamate as substrate. Is likely involved in the beta-phenylalanine degradation pathway that allows V.paradoxus strain CBF3 to use beta-phenylalanine as a sole nitrogen source. The chain is Beta-phenylalanine transaminase from Variovorax paradoxus.